Consider the following 266-residue polypeptide: Non-structural maintenance of chromosomes element 1 homolog (266 aa).

The segment at 1 to 102 (MQGSTRRAGA…SVSKMATDFA (102 aa)) is interaction with NSMCE3. The segment at 191 to 232 (CNICHGLLIQGQSCETCGIRMHLPCVAKYFQSIPEPHCPHCN) adopts an RING-type; atypical zinc-finger fold. The interval 246-266 (EKEREAGISKSSRKSLRTRQH) is disordered. Over residues 256 to 266 (SSRKSLRTRQH) the composition is skewed to basic residues.

Belongs to the NSE1 family. As to quaternary structure, component of the SMC5-SMC6 complex which consists at least of SMC5, SMC6, NSMCE2, NSMCE1, NSMCE4A or EID3 and NSMCE3. NSMCE1, NSMCE4A or EID3 and NSMCE3 probably form a subcomplex that bridges the head domains of the SMC5-SMC6 heterodimer. Interacts with NSMCE3. Post-translationally, ubiquitinated.

The protein resides in the nucleus. It is found in the chromosome. The protein localises to the telomere. The enzyme catalyses S-ubiquitinyl-[E2 ubiquitin-conjugating enzyme]-L-cysteine + [acceptor protein]-L-lysine = [E2 ubiquitin-conjugating enzyme]-L-cysteine + N(6)-ubiquitinyl-[acceptor protein]-L-lysine.. Its function is as follows. RING-type zinc finger-containing E3 ubiquitin ligase that assembles with melanoma antigen protein (MAGE) to catalyze the direct transfer of ubiquitin from E2 ubiquitin-conjugating enzyme to a specific substrate. Within MAGE-RING ubiquitin ligase complex, MAGE stimulates and specifies ubiquitin ligase activity likely through recruitment and/or stabilization of the E2 ubiquitin-conjugating enzyme at the E3:substrate complex. Involved in maintenance of genome integrity, DNA damage response and DNA repair. NSMCE3/MAGEG1 and NSMCE1 ubiquitin ligase are components of SMC5-SMC6 complex and may positively regulate homologous recombination-mediated DNA repair. This is Non-structural maintenance of chromosomes element 1 homolog (Nsmce1) from Mus musculus (Mouse).